A 234-amino-acid polypeptide reads, in one-letter code: DNA repair protein RecO (234 aa).

The protein belongs to the RecO family.

Involved in DNA repair and RecF pathway recombination. The protein is DNA repair protein RecO of Hamiltonella defensa subsp. Acyrthosiphon pisum (strain 5AT).